Reading from the N-terminus, the 689-residue chain is Glycine--tRNA ligase beta subunit (689 aa).

It belongs to the class-II aminoacyl-tRNA synthetase family. As to quaternary structure, tetramer of two alpha and two beta subunits.

It localises to the cytoplasm. The catalysed reaction is tRNA(Gly) + glycine + ATP = glycyl-tRNA(Gly) + AMP + diphosphate. The protein is Glycine--tRNA ligase beta subunit of Dichelobacter nodosus (strain VCS1703A).